The following is a 164-amino-acid chain: Respiratory growth induced protein 2 (164 aa).

The protein belongs to the RGI1 family.

Its subcellular location is the cytoplasm. In terms of biological role, involved in the control of energetic metabolism and significantly contribute to cell fitness, especially under respiratory growth conditions. This chain is Respiratory growth induced protein 2 (RGI2), found in Saccharomyces cerevisiae (strain RM11-1a) (Baker's yeast).